The primary structure comprises 84 residues: U8-theraphotoxin-Hhn1f (84 aa).

The first 21 residues, 1–21, serve as a signal peptide directing secretion; the sequence is MKVVLLVCLVWMMAMMELVSC. 5 disulfide bridges follow: Cys23-Cys35, Cys29-Cys44, Cys34-Cys67, Cys54-Cys75, and Cys69-Cys81.

The protein belongs to the AVIT (prokineticin) family. In terms of tissue distribution, expressed by the venom gland.

Its subcellular location is the secreted. This chain is U8-theraphotoxin-Hhn1f, found in Cyriopagopus hainanus (Chinese bird spider).